A 523-amino-acid polypeptide reads, in one-letter code: Apoptosis inhibitor 5-B (523 aa).

An ARM-like and Heat-like helical repeats region spans residues 1 to 360 (MPTVEELYRN…HQLGRKLPDF (360 aa)). Positions 446 to 523 (VQKTDSGQKR…RGNRSRGRIY (78 aa)) are disordered. A Nuclear localization signal motif is present at residues 454-475 (KRMSDETSSTSPPKKPVVGPKR). The segment covering 502–515 (GFQGGRGRGWGGRG) has biased composition (gly residues).

Belongs to the API5 family. As to quaternary structure, monomer.

The protein localises to the nucleus. Its function is as follows. May be an antiapoptotic factor. The sequence is that of Apoptosis inhibitor 5-B (api5-b) from Xenopus laevis (African clawed frog).